We begin with the raw amino-acid sequence, 363 residues long: Anthranilate phosphoribosyltransferase (363 aa).

Residues Gly85, 88–89 (GD), Thr93, 95–98 (NVST), 113–121 (KHGNRALSS), and Ala125 each bind 5-phospho-alpha-D-ribose 1-diphosphate. Gly85 contributes to the anthranilate binding site. Ser97 is a binding site for Mg(2+). Asn116 contributes to the anthranilate binding site. Anthranilate is bound at residue Arg171. Positions 233 and 234 each coordinate Mg(2+).

The protein belongs to the anthranilate phosphoribosyltransferase family. Homodimer. It depends on Mg(2+) as a cofactor.

The enzyme catalyses N-(5-phospho-beta-D-ribosyl)anthranilate + diphosphate = 5-phospho-alpha-D-ribose 1-diphosphate + anthranilate. The protein operates within amino-acid biosynthesis; L-tryptophan biosynthesis; L-tryptophan from chorismate: step 2/5. Functionally, catalyzes the transfer of the phosphoribosyl group of 5-phosphorylribose-1-pyrophosphate (PRPP) to anthranilate to yield N-(5'-phosphoribosyl)-anthranilate (PRA). This is Anthranilate phosphoribosyltransferase from Gluconobacter oxydans (strain 621H) (Gluconobacter suboxydans).